A 345-amino-acid polypeptide reads, in one-letter code: Biotin synthase (345 aa).

The Radical SAM core domain maps to 38 to 256 (QQVQVSTLLS…IAVARIMMPS (219 aa)). The [4Fe-4S] cluster site is built by cysteine 53, cysteine 57, and cysteine 60. [2Fe-2S] cluster contacts are provided by cysteine 97, cysteine 128, cysteine 188, and arginine 260.

This sequence belongs to the radical SAM superfamily. Biotin synthase family. In terms of assembly, homodimer. Requires [4Fe-4S] cluster as cofactor. [2Fe-2S] cluster serves as cofactor.

It carries out the reaction (4R,5S)-dethiobiotin + (sulfur carrier)-SH + 2 reduced [2Fe-2S]-[ferredoxin] + 2 S-adenosyl-L-methionine = (sulfur carrier)-H + biotin + 2 5'-deoxyadenosine + 2 L-methionine + 2 oxidized [2Fe-2S]-[ferredoxin]. The protein operates within cofactor biosynthesis; biotin biosynthesis; biotin from 7,8-diaminononanoate: step 2/2. Functionally, catalyzes the conversion of dethiobiotin (DTB) to biotin by the insertion of a sulfur atom into dethiobiotin via a radical-based mechanism. This Photorhabdus laumondii subsp. laumondii (strain DSM 15139 / CIP 105565 / TT01) (Photorhabdus luminescens subsp. laumondii) protein is Biotin synthase.